The primary structure comprises 241 residues: Pyridoxine 5'-phosphate synthase (241 aa).

Asparagine 7 contacts 3-amino-2-oxopropyl phosphate. 9–10 (DH) contributes to the 1-deoxy-D-xylulose 5-phosphate binding site. Position 18 (arginine 18) interacts with 3-amino-2-oxopropyl phosphate. The active-site Proton acceptor is the histidine 43. 1-deoxy-D-xylulose 5-phosphate is bound by residues arginine 45 and histidine 50. Glutamate 70 acts as the Proton acceptor in catalysis. Threonine 100 provides a ligand contact to 1-deoxy-D-xylulose 5-phosphate. Histidine 191 acts as the Proton donor in catalysis. 3-amino-2-oxopropyl phosphate contacts are provided by residues glycine 192 and 213–214 (GH).

Belongs to the PNP synthase family. As to quaternary structure, homooctamer; tetramer of dimers.

It localises to the cytoplasm. The enzyme catalyses 3-amino-2-oxopropyl phosphate + 1-deoxy-D-xylulose 5-phosphate = pyridoxine 5'-phosphate + phosphate + 2 H2O + H(+). Its pathway is cofactor biosynthesis; pyridoxine 5'-phosphate biosynthesis; pyridoxine 5'-phosphate from D-erythrose 4-phosphate: step 5/5. Its function is as follows. Catalyzes the complicated ring closure reaction between the two acyclic compounds 1-deoxy-D-xylulose-5-phosphate (DXP) and 3-amino-2-oxopropyl phosphate (1-amino-acetone-3-phosphate or AAP) to form pyridoxine 5'-phosphate (PNP) and inorganic phosphate. This Nitratidesulfovibrio vulgaris (strain ATCC 29579 / DSM 644 / CCUG 34227 / NCIMB 8303 / VKM B-1760 / Hildenborough) (Desulfovibrio vulgaris) protein is Pyridoxine 5'-phosphate synthase.